Consider the following 475-residue polypeptide: Aspartyl/glutamyl-tRNA(Asn/Gln) amidotransferase subunit B (475 aa).

This sequence belongs to the GatB/GatE family. GatB subfamily. Heterotrimer of A, B and C subunits.

It catalyses the reaction L-glutamyl-tRNA(Gln) + L-glutamine + ATP + H2O = L-glutaminyl-tRNA(Gln) + L-glutamate + ADP + phosphate + H(+). It carries out the reaction L-aspartyl-tRNA(Asn) + L-glutamine + ATP + H2O = L-asparaginyl-tRNA(Asn) + L-glutamate + ADP + phosphate + 2 H(+). Its function is as follows. Allows the formation of correctly charged Asn-tRNA(Asn) or Gln-tRNA(Gln) through the transamidation of misacylated Asp-tRNA(Asn) or Glu-tRNA(Gln) in organisms which lack either or both of asparaginyl-tRNA or glutaminyl-tRNA synthetases. The reaction takes place in the presence of glutamine and ATP through an activated phospho-Asp-tRNA(Asn) or phospho-Glu-tRNA(Gln). This chain is Aspartyl/glutamyl-tRNA(Asn/Gln) amidotransferase subunit B, found in Chlorobium phaeobacteroides (strain BS1).